The primary structure comprises 309 residues: Probable cell division protein WhiA (309 aa).

Positions 275-309 (SLKELGELVPGGPISKSGINHRLRKINQYAEKLRA) form a DNA-binding region, H-T-H motif.

The protein belongs to the WhiA family.

In terms of biological role, involved in cell division and chromosome segregation. The protein is Probable cell division protein WhiA of Pediococcus pentosaceus (strain ATCC 25745 / CCUG 21536 / LMG 10740 / 183-1w).